Here is a 273-residue protein sequence, read N- to C-terminus: Dermonecrotic toxin LdSicTox-alphaIB1bi (273 aa).

Residue His-5 is part of the active site. 2 residues coordinate Mg(2+): Glu-25 and Asp-27. The active-site Nucleophile is the His-41. Intrachain disulfides connect Cys-45-Cys-51 and Cys-47-Cys-190. Position 85 (Asp-85) interacts with Mg(2+). Residue Asn-250 is glycosylated (N-linked (GlcNAc...) asparagine).

It belongs to the arthropod phospholipase D family. Class II subfamily. Mg(2+) serves as cofactor. In terms of tissue distribution, expressed by the venom gland.

It is found in the secreted. The catalysed reaction is an N-(acyl)-sphingosylphosphocholine = an N-(acyl)-sphingosyl-1,3-cyclic phosphate + choline. The enzyme catalyses an N-(acyl)-sphingosylphosphoethanolamine = an N-(acyl)-sphingosyl-1,3-cyclic phosphate + ethanolamine. It carries out the reaction a 1-acyl-sn-glycero-3-phosphocholine = a 1-acyl-sn-glycero-2,3-cyclic phosphate + choline. It catalyses the reaction a 1-acyl-sn-glycero-3-phosphoethanolamine = a 1-acyl-sn-glycero-2,3-cyclic phosphate + ethanolamine. In terms of biological role, dermonecrotic toxins cleave the phosphodiester linkage between the phosphate and headgroup of certain phospholipids (sphingolipid and lysolipid substrates), forming an alcohol (often choline) and a cyclic phosphate. This toxin acts on sphingomyelin (SM). It may also act on ceramide phosphoethanolamine (CPE), lysophosphatidylcholine (LPC) and lysophosphatidylethanolamine (LPE), but not on lysophosphatidylserine (LPS), and lysophosphatidylglycerol (LPG). It acts by transphosphatidylation, releasing exclusively cyclic phosphate products as second products. Induces dermonecrosis, hemolysis, increased vascular permeability, edema, inflammatory response, and platelet aggregation. The protein is Dermonecrotic toxin LdSicTox-alphaIB1bi of Loxosceles deserta (Desert recluse spider).